A 480-amino-acid chain; its full sequence is Acetyl-coenzyme A carboxylase carboxyl transferase subunit beta, chloroplastic (480 aa).

The 269-residue stretch at 212-480 (LWVQCENCYG…FPLNQINKYK (269 aa)) folds into the CoA carboxyltransferase N-terminal domain. The Zn(2+) site is built by Cys-216, Cys-219, Cys-235, and Cys-238. The C4-type zinc finger occupies 216-238 (CENCYGLNYQKFFRSKMNICERC).

It belongs to the AccD/PCCB family. As to quaternary structure, acetyl-CoA carboxylase is a heterohexamer composed of biotin carboxyl carrier protein, biotin carboxylase and 2 subunits each of ACCase subunit alpha and ACCase plastid-coded subunit beta (accD). Requires Zn(2+) as cofactor.

It localises to the plastid. It is found in the chloroplast stroma. It carries out the reaction N(6)-carboxybiotinyl-L-lysyl-[protein] + acetyl-CoA = N(6)-biotinyl-L-lysyl-[protein] + malonyl-CoA. It participates in lipid metabolism; malonyl-CoA biosynthesis; malonyl-CoA from acetyl-CoA: step 1/1. Functionally, component of the acetyl coenzyme A carboxylase (ACC) complex. Biotin carboxylase (BC) catalyzes the carboxylation of biotin on its carrier protein (BCCP) and then the CO(2) group is transferred by the transcarboxylase to acetyl-CoA to form malonyl-CoA. The polypeptide is Acetyl-coenzyme A carboxylase carboxyl transferase subunit beta, chloroplastic (Illicium oligandrum (Star anise)).